The following is a 361-amino-acid chain: Putative agmatine deiminase (361 aa).

C354 serves as the catalytic Amidino-cysteine intermediate.

It belongs to the agmatine deiminase family.

It carries out the reaction agmatine + H2O = N-carbamoylputrescine + NH4(+). The polypeptide is Putative agmatine deiminase (Streptococcus pneumoniae (strain ATCC 700669 / Spain 23F-1)).